The primary structure comprises 614 residues: MSVRLSEGAIAAIMQGENVYKPVLQVINTRAIATGNGPPRYRVLMSDGVNTLSSFMLATQLNPLVEEERLSAHCICQVNRFIVNSLKDGRRVVILMDLDVLKTADMVGGTVGNPVPYNEGQGQQRSSAPTANAAPNKPQQQDGNLSVAGSAAPKYHAPSNQFSKASAPSSVKTPGGTQSKVVPIASLNPYQSKWTICARVTQKGQIRTWSNSRGEGKLFSIELVDESGEIRATAFNDQADKFFPLIELNKVYYFTKGNLKTANKQYTAVKNDYEITFNNETSVVPCDDAQHLPSVQFDFVSISDLENTPKDSIVDVIGICKSYEDVTKIVVKASNREVSKRNVHLMDTSGKLVTATLWGNEAEKFDGSRQPVIAIKGARVSDFGGRSLSVLSSSTVVVNPDSPEAFKLRGWFDSEGQLLECASISDVRGGSASGVNTNWKTLYEAKSERLGQGDKADYFSCVGTIVHLRKENCMYQACPSQDCNKKVIDQQNGLYRCEKCDREFPNFKYRMMLLVTIADSLDYQWVTCFQESAEFILGQSATFLGELKDKNEQAFEEVFQNANFNTYEFKIRVKLETYNDESRIKATALDVKPVNYREYSKRLIASIRRNAQLG.

A disordered region spans residues 112-178 (GNPVPYNEGQ…SSVKTPGGTQ (67 aa)). Polar residues-rich tracts occupy residues 120 to 130 (GQGQQRSSAPT) and 158 to 178 (PSNQ…GGTQ). A DNA-binding region (OB) is located at residues 194–278 (WTICARVTQK…VKNDYEITFN (85 aa)). The C4-type zinc finger occupies 478–500 (CPSQDCNKKVIDQQNGLYRCEKC).

The protein belongs to the replication factor A protein 1 family. As to quaternary structure, component of the heterotrimeric canonical replication protein A complex (RPA).

It is found in the nucleus. The protein resides in the PML body. Functionally, as part of the heterotrimeric replication protein A complex (RPA/RP-A), binds and stabilizes single-stranded DNA intermediates, that form during DNA replication or upon DNA stress. It prevents their reannealing and in parallel, recruits and activates different proteins and complexes involved in DNA metabolism. Thereby, it plays an essential role both in DNA replication and the cellular response to DNA damage. This Gallus gallus (Chicken) protein is Replication protein A 70 kDa DNA-binding subunit (RPA1).